Consider the following 328-residue polypeptide: Flap endonuclease 1 (328 aa).

The interval 1–98 is N-domain; sequence MGVKLRDVVS…ETVSRRADIR (98 aa). Mg(2+)-binding residues include aspartate 27, aspartate 80, glutamate 152, glutamate 154, aspartate 173, aspartate 175, and aspartate 226. Residues 116-247 form an I-domain region; the sequence is RAKKYAVRSS…RGLKLIREKG (132 aa). The interaction with PCNA stretch occupies residues 320–328; it reads TQKSLEDWF.

The protein belongs to the XPG/RAD2 endonuclease family. FEN1 subfamily. As to quaternary structure, interacts with PCNA. PCNA stimulates the nuclease activity without altering cleavage specificity. Requires Mg(2+) as cofactor.

Functionally, structure-specific nuclease with 5'-flap endonuclease and 5'-3' exonuclease activities involved in DNA replication and repair. During DNA replication, cleaves the 5'-overhanging flap structure that is generated by displacement synthesis when DNA polymerase encounters the 5'-end of a downstream Okazaki fragment. Binds the unpaired 3'-DNA end and kinks the DNA to facilitate 5' cleavage specificity. Cleaves one nucleotide into the double-stranded DNA from the junction in flap DNA, leaving a nick for ligation. Also involved in the base excision repair (BER) pathway. Acts as a genome stabilization factor that prevents flaps from equilibrating into structures that lead to duplications and deletions. Also possesses 5'-3' exonuclease activity on nicked or gapped double-stranded DNA. The sequence is that of Flap endonuclease 1 from Methanothermobacter thermautotrophicus (strain ATCC 29096 / DSM 1053 / JCM 10044 / NBRC 100330 / Delta H) (Methanobacterium thermoautotrophicum).